Reading from the N-terminus, the 327-residue chain is Vacuolar protein sorting-associated protein 26A (327 aa).

The interval 306–327 is disordered; that stretch reads RTNFHQRFESPDSQASAEQPEM. At serine 315 the chain carries Phosphoserine. Over residues 316–327 the composition is skewed to polar residues; it reads PDSQASAEQPEM.

The protein belongs to the VPS26 family. As to quaternary structure, component of the heterotrimeric retromer cargo-selective complex (CSC), also described as vacuolar protein sorting subcomplex (VPS), formed by VPS26 (VPS26A or VPS26B), VPS29 and VPS35. The CSC has a highly elongated structure with VPS26 and VPS29 binding independently at opposite distal ends of VPS35 as central platform. The CSC is believed to associate with variable sorting nexins to form functionally distinct retromer complex variants. The originally described retromer complex (also called SNX-BAR retromer) is a pentamer containing the CSC and a heterodimeric membrane-deforming subcomplex formed between SNX1 or SNX2 and SNX5 or SNX6 (also called SNX-BAR subcomplex); the respective CSC and SNX-BAR subcomplexes associate with low affinity. The CSC associates with SNX3 to form a SNX3-retromer complex. The CSC associates with SNX27, the WASH complex and the SNX-BAR subcomplex to form the SNX27-retromer complex. Interacts with VPS29, VPS35, SNX27. Interacts with SNX1, SNX2, SNX5, SNX6, SNX3, RAB7A, ECPAS, EHD1, WASHC5, SORL1.

It localises to the cytoplasm. Its subcellular location is the endosome membrane. It is found in the early endosome. Functionally, acts as a component of the retromer cargo-selective complex (CSC). The CSC is believed to be the core functional component of retromer or respective retromer complex variants acting to prevent missorting of selected transmembrane cargo proteins into the lysosomal degradation pathway. The recruitment of the CSC to the endosomal membrane involves RAB7A and SNX3. The SNX-BAR retromer mediates retrograde transport of cargo proteins from endosomes to the trans-Golgi network (TGN) and is involved in endosome-to-plasma membrane transport for cargo protein recycling. The SNX3-retromer mediates the retrograde endosome-to-TGN transport of WLS distinct from the SNX-BAR retromer pathway. The SNX27-retromer is believed to be involved in endosome-to-plasma membrane trafficking and recycling of a broad spectrum of cargo proteins. The CSC complex seems to act as recruitment hub for other proteins, such as the WASH complex and TBC1D5. Required for retrograde transport of lysosomal enzyme receptor IGF2R. Required to regulate transcytosis of the polymeric immunoglobulin receptor (pIgR-pIgA). Required for the endosomal localization of WASHC2 (indicative for the WASH complex). Required for the endosomal localization of TBC1D5. Mediates retromer cargo recognition of SORL1 and is involved in trafficking of SORL1 implicated in sorting and processing of APP. Involved in retromer-independent lysosomal sorting of F2R. Involved in recycling of ADRB2. Acts redundantly with VSP26B in SNX-27 mediated endocytic recycling of SLC2A1/GLUT1. Enhances the affinity of SNX27 for PDZ-binding motifs in cargo proteins. The chain is Vacuolar protein sorting-associated protein 26A (Vps26a) from Mus musculus (Mouse).